The following is a 163-amino-acid chain: Crossover junction endodeoxyribonuclease RuvC (163 aa).

Active-site residues include Asp9, Glu76, and Asp148. Mg(2+) is bound by residues Asp9, Glu76, and Asp148.

The protein belongs to the RuvC family. Homodimer which binds Holliday junction (HJ) DNA. The HJ becomes 2-fold symmetrical on binding to RuvC with unstacked arms; it has a different conformation from HJ DNA in complex with RuvA. In the full resolvosome a probable DNA-RuvA(4)-RuvB(12)-RuvC(2) complex forms which resolves the HJ. Requires Mg(2+) as cofactor.

The protein resides in the cytoplasm. The catalysed reaction is Endonucleolytic cleavage at a junction such as a reciprocal single-stranded crossover between two homologous DNA duplexes (Holliday junction).. In terms of biological role, the RuvA-RuvB-RuvC complex processes Holliday junction (HJ) DNA during genetic recombination and DNA repair. Endonuclease that resolves HJ intermediates. Cleaves cruciform DNA by making single-stranded nicks across the HJ at symmetrical positions within the homologous arms, yielding a 5'-phosphate and a 3'-hydroxyl group; requires a central core of homology in the junction. The consensus cleavage sequence is 5'-(A/T)TT(C/G)-3'. Cleavage occurs on the 3'-side of the TT dinucleotide at the point of strand exchange. HJ branch migration catalyzed by RuvA-RuvB allows RuvC to scan DNA until it finds its consensus sequence, where it cleaves and resolves the cruciform DNA. The sequence is that of Crossover junction endodeoxyribonuclease RuvC from Trichormus variabilis (strain ATCC 29413 / PCC 7937) (Anabaena variabilis).